The primary structure comprises 115 residues: Large ribosomal subunit protein bL19 (115 aa).

Belongs to the bacterial ribosomal protein bL19 family.

In terms of biological role, this protein is located at the 30S-50S ribosomal subunit interface and may play a role in the structure and function of the aminoacyl-tRNA binding site. The sequence is that of Large ribosomal subunit protein bL19 from Streptococcus sanguinis (strain SK36).